The chain runs to 507 residues: ATP synthase subunit alpha, chloroplastic (507 aa).

170 to 177 lines the ATP pocket; that stretch reads GDRQTGKT. Thr257 is subject to Phosphothreonine.

Belongs to the ATPase alpha/beta chains family. F-type ATPases have 2 components, CF(1) - the catalytic core - and CF(0) - the membrane proton channel. CF(1) has five subunits: alpha(3), beta(3), gamma(1), delta(1), epsilon(1). CF(0) has four main subunits: a, b, b' and c.

Its subcellular location is the plastid. The protein localises to the chloroplast thylakoid membrane. It catalyses the reaction ATP + H2O + 4 H(+)(in) = ADP + phosphate + 5 H(+)(out). Its function is as follows. Produces ATP from ADP in the presence of a proton gradient across the membrane. The alpha chain is a regulatory subunit. The chain is ATP synthase subunit alpha, chloroplastic from Barbarea verna (Land cress).